Here is a 402-residue protein sequence, read N- to C-terminus: 1-deoxy-D-xylulose 5-phosphate reductoisomerase (402 aa).

7 residues coordinate NADPH: threonine 21, glycine 22, serine 23, isoleucine 24, glycine 47, asparagine 50, and asparagine 127. 1-deoxy-D-xylulose 5-phosphate is bound at residue lysine 128. Glutamate 129 is a binding site for NADPH. Position 151 (aspartate 151) interacts with Mn(2+). The 1-deoxy-D-xylulose 5-phosphate site is built by serine 152, glutamate 153, serine 177, and histidine 200. Glutamate 153 serves as a coordination point for Mn(2+). Glycine 206 serves as a coordination point for NADPH. Residues serine 213, asparagine 218, lysine 219, and glutamate 222 each coordinate 1-deoxy-D-xylulose 5-phosphate. Glutamate 222 contacts Mn(2+).

The protein belongs to the DXR family. The cofactor is Mg(2+). It depends on Mn(2+) as a cofactor.

It catalyses the reaction 2-C-methyl-D-erythritol 4-phosphate + NADP(+) = 1-deoxy-D-xylulose 5-phosphate + NADPH + H(+). It participates in isoprenoid biosynthesis; isopentenyl diphosphate biosynthesis via DXP pathway; isopentenyl diphosphate from 1-deoxy-D-xylulose 5-phosphate: step 1/6. Catalyzes the NADPH-dependent rearrangement and reduction of 1-deoxy-D-xylulose-5-phosphate (DXP) to 2-C-methyl-D-erythritol 4-phosphate (MEP). The polypeptide is 1-deoxy-D-xylulose 5-phosphate reductoisomerase (Mycobacterium marinum (strain ATCC BAA-535 / M)).